The primary structure comprises 103 residues: Large ribosomal subunit protein bL21 (103 aa).

It belongs to the bacterial ribosomal protein bL21 family. As to quaternary structure, part of the 50S ribosomal subunit. Contacts protein L20.

Functionally, this protein binds to 23S rRNA in the presence of protein L20. In Aliivibrio salmonicida (strain LFI1238) (Vibrio salmonicida (strain LFI1238)), this protein is Large ribosomal subunit protein bL21.